Here is a 913-residue protein sequence, read N- to C-terminus: MSRFFTTGSDSESESSLSGEELVTKPVGGNYGKQPLLLSEDEEDTKRVVRSAKDKRFEELTNLIRTIRNAMKIRDVTKCLEEFELLGKAYGKAKSIVDKEGVPRFYIRILADLEDYLNELWEDKEGKKKMNKNNAKALSTLRQKIRKYNRDFESHITSYKQNPEQSADEDAEKNEEDSEGSSDEDEDEDGVSAATFLKKKSEAPSGESRKFLKKMDDEDEDSEDSEDDEDWDTGSTSSDSDSEEEEGKQTALASRFLKKAPTTDEDKKAAEKKREDKAKKKHDRKSKRLDEEEEDNEGGEWERVRGGVPLVKEKPKMFAKGTEITHAVVIKKLNEILQARGKKGTDRAAQIELLQLLVQIAAENNLGEGVIVKIKFNIIASLYDYNPNLATYMKPEMWGKCLDCINELMDILFANPNIFVGENILEESENLHNADQPLRVRGCILTLVERMDEEFTKIMQNTDPHSQEYVEHLKDEAQVCAIIERVQRYLEEKGTTEEVCRIYLLRILHTYYKFDYKAHQRQLTPPEGSSKSEQDQAENEGEDSAVLMERLCKYIYAKDRTDRIRTCAILCHIYHHALHSRWYQARDLMLMSHLQDNIQHADPPVQILYNRTMVQLGICAFRQGLTKDAHNALLDIQSSGRAKELLGQGLLLRSLQERNQEQEKVERRRQVPFHLHINLELLECVYLVSAMLLEIPYMAAHESDARRRMISKQFHHQLRVGERQPLLGPPESMREHVVAASKAMKMGDWKTCHSFIINEKMNGKVWDLFPEADKVRTMLVRKIQEESLRTYLFTYSSVYDSISMETLSDMFELDLPTVHSIISKMIINEELMASLDQPTQTVVMHRTEPTAQQNLALQLAEKLGSLVENNERVFDHKQGTYGGYFRDQKDGYRKNEGYMRRGGYRQQQSQTAY.

The disordered stretch occupies residues 1–44 (MSRFFTTGSDSESESSLSGEELVTKPVGGNYGKQPLLLSEDEED). Over residues 8 to 21 (GSDSESESSLSGEE) the composition is skewed to low complexity. A phosphoserine mark is found at S9, S11, S13, S15, S16, S18, and S39. The residue at position 99 (K99) is an N6-acetyllysine. Disordered stretches follow at residues 157–301 (TSYK…GGEW) and 522–542 (QLTP…NEGE). Phosphoserine is present on residues S166, S178, S181, and S182. The span at 166 to 190 (SADEDAEKNEEDSEGSSDEDEDEDG) shows a compositional bias: acidic residues. Residues 199-216 (KKSEAPSGESRKFLKKMD) show a composition bias toward basic and acidic residues. Over residues 217 to 232 (DEDEDSEDSEDDEDWD) the composition is skewed to acidic residues. Residues 261–278 (PTTDEDKKAAEKKREDKA) show a composition bias toward basic and acidic residues. The segment covering 522 to 531 (QLTPPEGSSK) has biased composition (polar residues). Residue T524 is modified to Phosphothreonine. Residue K643 is modified to N6-acetyllysine. The PCI domain maps to 673-849 (FHLHINLELL…QTVVMHRTEP (177 aa)). Residues 885-913 (FRDQKDGYRKNEGYMRRGGYRQQQSQTAY) form a disordered region. The segment covering 886–899 (RDQKDGYRKNEGYM) has biased composition (basic and acidic residues). S909 is modified (phosphoserine).

As to quaternary structure, component of the eukaryotic translation initiation factor 3 (eIF-3) complex, which is composed of 13 subunits: EIF3A, EIF3B, EIF3C, EIF3D, EIF3E, EIF3F, EIF3G, EIF3H, EIF3I, EIF3J, EIF3K, EIF3L and EIF3M. The eIF-3 complex appears to include 3 stable modules: module A is composed of EIF3A, EIF3B, EIF3G and EIF3I; module B is composed of EIF3F, EIF3H, and EIF3M; and module C is composed of EIF3C, EIF3D, EIF3E, EIF3K and EIF3L. EIF3C of module C binds EIF3B of module A and EIF3H of module B, thereby linking the three modules. EIF3J is a labile subunit that binds to the eIF-3 complex via EIF3B. The eIF-3 complex interacts with RPS6KB1 under conditions of nutrient depletion. Mitogenic stimulation leads to binding and activation of a complex composed of MTOR and RPTOR, leading to phosphorylation and release of RPS6KB1 and binding of EIF4B to eIF-3. Identified in a HCV IRES-mediated translation complex, at least composed of EIF3C, IGF2BP1, RPS3 and HCV RNA-replicon. Interacts with ALKBH4, IFIT1 and IFIT2. Interacts with BZW2/5MP1. Post-translationally, phosphorylated. Phosphorylation is enhanced upon serum stimulation.

The protein resides in the cytoplasm. Component of the eukaryotic translation initiation factor 3 (eIF-3) complex, which is required for several steps in the initiation of protein synthesis. The eIF-3 complex associates with the 40S ribosome and facilitates the recruitment of eIF-1, eIF-1A, eIF-2:GTP:methionyl-tRNAi and eIF-5 to form the 43S pre-initiation complex (43S PIC). The eIF-3 complex stimulates mRNA recruitment to the 43S PIC and scanning of the mRNA for AUG recognition. The eIF-3 complex is also required for disassembly and recycling of post-termination ribosomal complexes and subsequently prevents premature joining of the 40S and 60S ribosomal subunits prior to initiation. The eIF-3 complex specifically targets and initiates translation of a subset of mRNAs involved in cell proliferation, including cell cycling, differentiation and apoptosis, and uses different modes of RNA stem-loop binding to exert either translational activation or repression. The chain is Eukaryotic translation initiation factor 3 subunit C from Homo sapiens (Human).